Here is a 25-residue protein sequence, read N- to C-terminus: Inorganic pyrophosphatase (25 aa).

Monomer. Requires Mg(2+) as cofactor.

It catalyses the reaction diphosphate + H2O = 2 phosphate + H(+). This Cyanophora paradoxa protein is Inorganic pyrophosphatase.